We begin with the raw amino-acid sequence, 505 residues long: Buccalin (505 aa).

Positions 1 to 25 (MAHHRGHRHILLYVSLALSLGLALA) are cleaved as a signal peptide. Positions 26 to 62 (EDATDPSDDTGSFDDVEAVSEEADLDPYSMSQELNKR) are excised as a propeptide. Valine 74 is subject to Valine amide. 2 positions are modified to leucine amide: leucine 88 and leucine 102. Position 106 is a pyrrolidone carboxylic acid (glutamine 106). Isoleucine 116 carries the post-translational modification Isoleucine amide. Leucine 129, leucine 143, leucine 157, leucine 171, leucine 185, leucine 199, leucine 213, leucine 227, leucine 241, leucine 254, leucine 267, leucine 281, leucine 294, leucine 307, leucine 321, and leucine 335 each carry leucine amide. Glutamate 349 carries the post-translational modification Glutamic acid 1-amide. Leucine 363, leucine 377, leucine 391, leucine 405, leucine 419, and leucine 433 each carry leucine amide. Isoleucine amide is present on residues isoleucine 447 and isoleucine 461. Glutamine 465 carries the post-translational modification Pyrrolidone carboxylic acid. The disordered stretch occupies residues 472–505 (SGRLGKRSSSEQEEEDVRQVEKRSTTEEQSSKSL). The residue at position 475 (leucine 475) is a Leucine amide. Residues 488–505 (VRQVEKRSTTEEQSSKSL) are compositionally biased toward basic and acidic residues. Residues 495–505 (STTEEQSSKSL) constitute a propeptide that is removed on maturation.

Cholinergic motor neuron B15 innervating buccal muscles in Aplysia.

It localises to the secreted. Its function is as follows. Modulatory neuropeptide, acting presynaptically on nerve terminals to inhibit acetylcholine release. The polypeptide is Buccalin (Aplysia californica (California sea hare)).